The sequence spans 249 residues: Phosphoribosylaminoimidazole-succinocarboxamide synthase (249 aa).

The protein belongs to the SAICAR synthetase family.

The catalysed reaction is 5-amino-1-(5-phospho-D-ribosyl)imidazole-4-carboxylate + L-aspartate + ATP = (2S)-2-[5-amino-1-(5-phospho-beta-D-ribosyl)imidazole-4-carboxamido]succinate + ADP + phosphate + 2 H(+). It participates in purine metabolism; IMP biosynthesis via de novo pathway; 5-amino-1-(5-phospho-D-ribosyl)imidazole-4-carboxamide from 5-amino-1-(5-phospho-D-ribosyl)imidazole-4-carboxylate: step 1/2. This chain is Phosphoribosylaminoimidazole-succinocarboxamide synthase, found in Roseiflexus castenholzii (strain DSM 13941 / HLO8).